The sequence spans 288 residues: UAP56-interacting factor (288 aa).

A UAP56-binding motif motif is present at residues 11–29 (TIDKIDMSLDDIIKLNKQE). Residues 183–202 (DLPELSKTPPWRTSVSSGGS) form a disordered region.

This sequence belongs to the UIF family.

It localises to the nucleus. The protein resides in the nucleoplasm. It is found in the nucleus speckle. Its function is as follows. Required for mRNA export from the nucleus to the cytoplasm. Acts as an adapter that uses the ddx39b/uap56-nfx1 pathway to ensure efficient mRNA export and delivering to the nuclear pore. This is UAP56-interacting factor (fyttd1) from Xenopus laevis (African clawed frog).